Here is a 920-residue protein sequence, read N- to C-terminus: Glutamate receptor 2.2 (920 aa).

The N-terminal stretch at 1-24 (MKNSKLFFRFLFLFFFFCLESSRG) is a signal peptide. The Extracellular portion of the chain corresponds to 25–580 (QDNGKTQVNI…DKFSFLKPLS (556 aa)). Residues Asn-53, Asn-204, Asn-267, Asn-331, Asn-342, Asn-477, and Asn-542 are each glycosylated (N-linked (GlcNAc...) asparagine). Residues 581–601 (IELWLTTLVFFFLVGISVWTL) form a helical membrane-spanning segment. Topologically, residues 602–610 (EHRVNSDFR) are cytoplasmic. A helical membrane pass occupies residues 611–631 (GPANYQASTIFWFAFSTMVFA). The Cytoplasmic portion of the chain corresponds to 632–635 (PRER). Residues 636–656 (VLSFGARSLVVTWYFVLLVLT) traverse the membrane as a helical segment. Residues 657-830 (QSYTASLASL…VTAIQLGVGS (174 aa)) lie on the Extracellular side of the membrane. N-linked (GlcNAc...) asparagine glycosylation is present at Asn-702. Residues 831–851 (FWFLFLVVFVVCVLALGKFTF) form a helical membrane-spanning segment. Topologically, residues 852–920 (CFLWKTKGKD…QVNQTDPDCL (69 aa)) are cytoplasmic.

Belongs to the glutamate-gated ion channel (TC 1.A.10.1) family. May form heteromers. In terms of tissue distribution, expressed predominantly in roots.

It is found in the membrane. Functionally, glutamate-gated receptor that probably acts as a non-selective cation channel. May be involved in light-signal transduction and calcium homeostasis via the regulation of calcium influx into cells. The protein is Glutamate receptor 2.2 (GLR2.2) of Arabidopsis thaliana (Mouse-ear cress).